The sequence spans 272 residues: 2,3,4,5-tetrahydropyridine-2,6-dicarboxylate N-succinyltransferase (272 aa).

Substrate is bound by residues Arg104 and Asp141.

Belongs to the transferase hexapeptide repeat family. As to quaternary structure, homotrimer.

It localises to the cytoplasm. The enzyme catalyses (S)-2,3,4,5-tetrahydrodipicolinate + succinyl-CoA + H2O = (S)-2-succinylamino-6-oxoheptanedioate + CoA. The protein operates within amino-acid biosynthesis; L-lysine biosynthesis via DAP pathway; LL-2,6-diaminopimelate from (S)-tetrahydrodipicolinate (succinylase route): step 1/3. This chain is 2,3,4,5-tetrahydropyridine-2,6-dicarboxylate N-succinyltransferase, found in Alkalilimnicola ehrlichii (strain ATCC BAA-1101 / DSM 17681 / MLHE-1).